A 495-amino-acid polypeptide reads, in one-letter code: Catalase B (495 aa).

Residues 1–25 (MSNNKKLTSLFGAPVSDRENSMTAG) are disordered. Residues histidine 55 and asparagine 128 contribute to the active site. Tyrosine 338 provides a ligand contact to heme.

The protein belongs to the catalase family. As to quaternary structure, homodimer. The cofactor is heme.

It catalyses the reaction 2 H2O2 = O2 + 2 H2O. Functionally, decomposes hydrogen peroxide into water and oxygen; serves to protect cells from the toxic effects of hydrogen peroxide. The sequence is that of Catalase B (katB) from Staphylococcus xylosus.